The sequence spans 491 residues: MTGLLVAGTTSDAGKTAVTTGLCRALARRGVKVAPYKAQNMSNNSMVCTSVDGAGAEIGRAQWVQALAARATPEPAMNPVLLKPGSDRRSHVVLMGRPWGQVSSSDWLEGRRALATAAHEAFDELASRYEVVVAEGAGSPTEINLRAGDYVNLGLARHAGLPTVVVGDIDRGGVFAAFFGTVALLSPQDQALIAGFVVNKFRGDVDLLAPGLRDLERLTGRRVYGTLPWHPDIWLDSEDALELAGRRSAQSGARRVAVIRLPRISNFTDVDALGLEPDLDVVFASHPGSLADADLVVLPGTRATIADLAWLRSRGLDSALRRHVAAGRPVLGICGGFQMLGRVIRDPHGVEGPVAGVDGLGLLDVETTFGPDKVLRLPSGRWFGAPATGYEIHHGRITRGDGVDEFLDGARCGQVFGTMWHGALEGDELRSRFLQEALGVAPSGVSFPAAREARLDLLGDLVERHLDVDALLDLAKTGPVAGLPFLPPGAP.

A GATase cobBQ-type domain is found at 253–429; sequence ARRVAVIRLP…WHGALEGDEL (177 aa). The active-site Nucleophile is the cysteine 334. Histidine 421 is a catalytic residue.

This sequence belongs to the CobB/CobQ family. CobQ subfamily.

It functions in the pathway cofactor biosynthesis; adenosylcobalamin biosynthesis. Functionally, catalyzes amidations at positions B, D, E, and G on adenosylcobyrinic A,C-diamide. NH(2) groups are provided by glutamine, and one molecule of ATP is hydrogenolyzed for each amidation. The polypeptide is Cobyric acid synthase (Mycolicibacterium gilvum (strain PYR-GCK) (Mycobacterium gilvum (strain PYR-GCK))).